The sequence spans 3023 residues: MSTLPKPKRQTKRNTLRRPKNVKFPAGGQIVGEVYVLPRRGPQLGVREVRKTSERSQPRGRRQPTPKARPREGRSWAQPGYPWPLYGNEGCGWAGWLLPPRGSRPSWGQNDPRRRSRNLGKVIDTLTCGFADLMGYIPLIGAPVGGVARALAHGVRALEDGVNYATGNLPGCSFSIFLLALFSCLTCPASSLEYRNASGLYLLTNDCSNRSIVYEADDVILHLPGCVPCVETDNNNTSCWTPISPTVAVKHPGVTTASIRNHVNMLVAPPTLCSALYVEDAFGAVSLVGQAFTFRPRQHKTVQTCNCSIYPGHVSGHRMAWDMMMNWSPAIGLVISHLMRLPQTFFDLVVGAHWGVMAGLAYFSMQGNWAKVVIVLIMFSGVDATTHTTGGSAAQATAGFTSFFTRGPSQNLQLVNSNGSWHINSTALNCNDSLNTGFIAGLFYYHKFNSSGCPERMSSCKPITYFNQGWGPLTDANINGPSEDRPYCWHYPPRPCNITKPLNVCGPVYCFTPSPVVVGTTDIKGLPTYRFGVNESDVFLLTSLRPPQGRWFGCVWMNSTGFVKTCGAPPCNIYGGMKDIEANQTHLKCPTDCFRKHHDATFTRCGSGPWLTPRCLVDYPYRLWHYPCTVNFSIFKVRMFVGGHEHRFSAACNWTRGERCDLEDRDRSEQQPLLHSTTDSLILPCSFTPMRRLSTGLIHLHQNIVDVQYLYGVGSAVVGWALKWEFVVLVFLLLADARVCVALWMMLLISQAEAAMENLVMLNALSAAGQQGYVWYLVAFCAAWHIRGKLVPLITYGLTGLWPLALLDLLLPQRAYAWTGEDDATIGAGVLLLLGFFTLSPWYKHWIGRLIWWNQYAICRGEAALQVWVPPLLVRGSRDSVILLASLLYPSLIFDITKLLIAVLGPLYLIQAALTSTPYFVRAHVLIRICMLVRSAMGGKYVQMAVLTVGRWFNTYLYDHLSPIQDWAAEGLKGLAVATEPVIFSPMEIKVITWGADTAACGDILCGLPVSARLGRELLLGPADDYKKMGWRLLSPISAYAQQTRGLFGTIVTSLTGRDKNVVTGEVQVLSTATQTFLGTTVGGVMWTVYHGAGSRTLAGNKRPALQMYTNVDQDLVGWPAPAGTKSLDPCTCGSSDLYLVTREADVLPARRRGDSTASLLSTRPLSCLKGSSGGPVMCPSGHVVGIFRAAVCTRGVAKALQFIPVETLSTQVRSPSFSDNSTPPAVPESYQVGYLHAPTGSGKSTKVPAAYVAQGYSVLVLNPSVAATLGFGTYMSKAYGIDPNIRTGTRTITTGAKLTYSTYGKFLADGGCSGGAYDVIICDECHAQDATSILGIGTVLDQAETAGVRLTVLATATPPGSITVPHPNIEEVGLTSDGEIPFYGKALPLAMIKGGRHLVFCHSKEKCDELASKLRGMGVNAVAFYRGLDVSVIPVSGDVVVCATDALMTGYTGDFDTVIDCNVAVEQYVDFSLDPTFSIETRTVPQDAVSRSQRRGRTGRGRPGIYRFVTPGERPSGMFDSVVLCECYDAGCSWYDLQPAETTVRLRAYLSTPGLPVCQDHLDFWERVFTGLTHIDAHFLSQAKQQGLNFAYLVAYQATVCARAKASPPCWDEMWKCLIRLKPTLQGPTPLLYRLGAIQNDICMTHPITKYIMACMSADLEVTTSAWVLVGGVLAALAAYCLSVGCVVIVGHIELGGKPALVPDRQVLYQQYDEMEECSQSAPYIEQAQAIAQQFKDKVLGLLQRASQQEAEIRPIVQSQWQKAEAFWQQHMWNFVSGIQYLAGLSTLPGNPAVASLMAFTASVTSPLTTNQTMFFNILGGWVATHLAGPAASSAFVVSGLAGAAVGGIGIGRVLLDVLAGYGAGVSGALVAFKIMGGELPTTEDMVNLLPAILSPGALVVGVICAAVLRRHVGPGEGAVQWMNRLIAFASRGNHVSPTHYVPESDAAAKVTALLSSLTVTRLLRRLHQWINEDYPSPCNGDWLHDIWDWVCIVLSDFKTWLSAKIMPKVPGIPFLSCQKGYKGVWRGDGVMTTRCPCGEDFTGHVRNGSMRIAGSGLCANMWHGTFPINEYTTGPSTPVPAHNYSRALWRVTSDSYVEVRRVGDTHYVVGATNDGLKIPCQVPAPEFFTELDGVRLHRYAPPCKPLLRDEITFSVGLHSYANGSQLSCEPEPDVAVLTSMLRDPAHITAATAARRLARGSPPSEASSSASQLSAPSLKATCQTHRPHPDAELIDANLLWRQEMGSNITRVESETKVVILDSFEPLRAEEDDTELSIPAECFKKPPKYPPALPIWARPDYNPPLLPSWKDPTYEPPAVHGCALPPTRPAPVPPPRRKRTIKLDGSNVSAALLALAERSFPSTKPEGTGTSSSGVGTESTAESGDSPETGEESDVESYSSMPPLEGEPGDPDLDADSWSTVSDSEEQSVVCCSMSYSWTGAIITPCSAEEEKLPISPLSNSLLRHHNLVYSTSSRSAAARQKKVTFDRLQVLDDHYKNVLKEVKERASGVKGRLLSFEEACSLVPPHSGRSKYGYSAKDVRSLSSKAMNQIRSVWEDLLEDNSTPIPTTIMAKNEVFSVNPAKGGRKPARLIVYPDLGVRVCEKRALYDVIQKLSIATMGPAYGFQYSPKQRVEHLLKMWTSKKTPLGFSYDTRCFDSTVTEHDIRTEEGIYQCCDLEPEARKAISALTERLYIGGPMYNSKGLQCGYRRCRASGVLPTSFGNTITCYIKATAASRAAGLKNPSFLVCGDDLVVISESCGVEEDRTALRAFTEAMTRYSAPPGDAPQPTYDLELISSCSSNVSVACDGAGKRYYYLTRDPETPLARAAWETARHTPVNSWLGNIIMFAPTIWVRMVLITHFFSILQAQEQLERALDFEMYGATYSVTPLDLPAIIERLHGLSAFSLHGYSPTELNRVAGALRKLGIPPLRAWRHRARAVRAKLIAQGGKARICGLYLFNWAVRTKTKLTPLPTAGQLDLSSWFTVGVGGNDIYHSVSRARTRHLLLCLLLLTVGVGIFLLPAR.

Over residues 1-21 (MSTLPKPKRQTKRNTLRRPKN) the composition is skewed to basic residues. An N-acetylserine; by host modification is found at serine 2. The tract at residues 2-23 (STLPKPKRQTKRNTLRRPKNVK) is interaction with STAT1. Residues 2-58 (STLPKPKRQTKRNTLRRPKNVKFPAGGQIVGEVYVLPRRGPQLGVREVRKTSERSQP) are interaction with EIF2AK2/PKR. Residues 2 to 59 (STLPKPKRQTKRNTLRRPKNVKFPAGGQIVGEVYVLPRRGPQLGVREVRKTSERSQPR) form an interaction with DDX3X region. The disordered stretch occupies residues 2–75 (STLPKPKRQT…PKARPREGRS (74 aa)). The Cytoplasmic portion of the chain corresponds to 2-168 (STLPKPKRQT…EDGVNYATGN (167 aa)). Short sequence motifs (nuclear localization signal) lie at residues 5–13 (PKPKRQTKR) and 38–43 (PRRGPQ). Positions 47–57 (REVRKTSERSQ) are enriched in basic and acidic residues. Serine 53 is subject to Phosphoserine; by host. 2 short sequence motifs (nuclear localization signal) span residues 58 to 64 (PRGRRQP) and 66 to 71 (PKARPR). An important for endoplasmic reticulum and mitochondrial localization region spans residues 112–152 (PRRRSRNLGKVIDTLTCGFADLMGYIPLIGAPVGGVARALA). Residue serine 116 is modified to Phosphoserine; by host. Residues 122–173 (VIDTLTCGFADLMGYIPLIGAPVGGVARALAHGVRALEDGVNYATGNLPGCS) are interaction with APOA2. The segment at 164–167 (YATG) is important for lipid droplets localization. The chain crosses the membrane as a helical span at residues 169–189 (LPGCSFSIFLLALFSCLTCPA). Residues 178 to 191 (LLALFSCLTCPASS) constitute a propeptide, ER anchor for the core protein, removed in mature form by host signal peptidase. Residues 190-359 (SSLEYRNASG…VGAHWGVMAG (170 aa)) are Lumenal-facing. Asparagine 196, asparagine 209, and asparagine 235 each carry an N-linked (GlcNAc...) asparagine; by host glycan. The segment at 266–297 (LVAPPTLCSALYVEDAFGAVSLVGQAFTFRPR) is important for fusion. The N-linked (GlcNAc...) asparagine; by host glycan is linked to asparagine 306. The helical transmembrane segment at 360–380 (LAYFSMQGNWAKVVIVLIMFS) threads the bilayer. Topologically, residues 381-733 (GVDATTHTTG…WEFVVLVFLL (353 aa)) are lumenal. The segment at 386 to 413 (THTTGGSAAQATAGFTSFFTRGPSQNLQ) is HVR1. 3 N-linked (GlcNAc...) (high mannose) asparagine; by host glycosylation sites follow: asparagine 418, asparagine 424, and asparagine 431. Cystine bridges form between cysteine 430/cysteine 554, cysteine 453/cysteine 460, cysteine 488/cysteine 496, and cysteine 505/cysteine 510. Asparagine 449 carries N-linked (GlcNAc...) asparagine; by host glycosylation. The HVR2 stretch occupies residues 476–480 (ANING). The N-linked (GlcNAc...) asparagine; by host glycan is linked to asparagine 477. Residues 482–495 (SEDRPYCWHYPPRP) are CD81-binding 1. N-linked (GlcNAc...) asparagine; by host glycosylation is present at asparagine 534. The CD81-binding 2 stretch occupies residues 546–553 (PPQGRWFG). Asparagine 558 carries an N-linked (GlcNAc...) asparagine; by host glycan. 4 disulfides stabilise this stretch: cysteine 566/cysteine 571, cysteine 589/cysteine 593, cysteine 605/cysteine 628, and cysteine 615/cysteine 652. N-linked (GlcNAc...) (high mannose) asparagine; by host glycans are attached at residues asparagine 631 and asparagine 653. Cysteine 660 and cysteine 685 are joined by a disulfide. Residues 668-679 (SEQQPLLHSTTD) are PKR/eIF2-alpha phosphorylation homology domain (PePHD). Residues 734-754 (LADARVCVALWMMLLISQAEA) form a helical membrane-spanning segment. At 755 to 765 (AMENLVMLNAL) the chain is on the lumenal side. A helical membrane pass occupies residues 766-786 (SAAGQQGYVWYLVAFCAAWHI). Residues 787–790 (RGKL) are Cytoplasmic-facing. The chain crosses the membrane as a helical span at residues 791–811 (VPLITYGLTGLWPLALLDLLL). At 812 to 821 (PQRAYAWTGE) the chain is on the lumenal side. Residues 822–842 (DDATIGAGVLLLLGFFTLSPW) form a helical membrane-spanning segment. The Cytoplasmic portion of the chain corresponds to 843-889 (YKHWIGRLIWWNQYAICRGEAALQVWVPPLLVRGSRDSVILLASLLY). A helical membrane pass occupies residues 890 to 910 (PSLIFDITKLLIAVLGPLYLI). Residues 907–1034 (LYLIQAALTS…DYKKMGWRLL (128 aa)) enclose the Peptidase C18 domain. Residues 911–936 (QAALTSTPYFVRAHVLIRICMLVRSA) lie on the Lumenal side of the membrane. The tract at residues 912 to 1214 (AALTSTPYFV…PVETLSTQVR (303 aa)) is protease NS2-3. Residue cysteine 930 is the site of S-palmitoyl cysteine; by host attachment. A helical transmembrane segment spans residues 937-957 (MGGKYVQMAVLTVGRWFNTYL). An interaction with host SCPS1 region spans residues 937–957 (MGGKYVQMAVLTVGRWFNTYL). Residues 958–1665 (YDHLSPIQDW…CMSADLEVTT (708 aa)) are Cytoplasmic-facing. Active-site for protease NS2 activity; shared with dimeric partner residues include histidine 960, glutamate 980, and cysteine 1001. Positions 1035–1216 (SPISAYAQQT…ETLSTQVRSP (182 aa)) constitute a Peptidase S29 domain. Catalysis depends on charge relay system; for serine protease NS3 activity residues histidine 1091 and aspartate 1115. Cysteine 1131 and cysteine 1133 together coordinate Zn(2+). Serine 1173 serves as the catalytic Charge relay system; for serine protease NS3 activity. Residues cysteine 1179 and histidine 1183 each coordinate Zn(2+). In terms of domain architecture, Helicase ATP-binding spans 1225–1377 (PAVPESYQVG…PNIEEVGLTS (153 aa)). 1238–1245 (APTGSGKS) provides a ligand contact to ATP. Positions 1245 and 1325 each coordinate Mg(2+). The DECH box signature appears at 1324 to 1327 (DECH). One can recognise a Helicase C-terminal domain in the interval 1387-1546 (ALPLAMIKGG…DLQPAETTVR (160 aa)). Positions 1494-1506 (QRRGRTGRGRPGI) are RNA-binding. A helical transmembrane segment spans residues 1666–1686 (SAWVLVGGVLAALAAYCLSVG). The NS3-binding stretch occupies residues 1687–1698 (CVVIVGHIELGG). Residues 1687-1813 (CVVIVGHIEL…SVTSPLTTNQ (127 aa)) lie on the Cytoplasmic side of the membrane. A helical transmembrane segment spans residues 1814-1834 (TMFFNILGGWVATHLAGPAAS). The Lumenal segment spans residues 1835 to 1836 (SA). A helical membrane pass occupies residues 1837-1857 (FVVSGLAGAAVGGIGIGRVLL). Residue aspartate 1858 is a topological domain, cytoplasmic. Residues 1859–1879 (VLAGYGAGVSGALVAFKIMGG) form a helical membrane-spanning segment. The Lumenal portion of the chain corresponds to 1880–1889 (ELPTTEDMVN). Residues 1890–1910 (LLPAILSPGALVVGVICAAVL) traverse the membrane as a helical segment. Residues 1911–1980 (RRHVGPGEGA…WINEDYPSPC (70 aa)) are Cytoplasmic-facing. Cysteine 1980 carries S-palmitoyl cysteine; by host lipidation. The stretch at 1981–2010 (NGDWLHDIWDWVCIVLSDFKTWLSAKIMPK) is an intramembrane region. Residues 2011–3002 (VPGIPFLSCQ…YHSVSRARTR (992 aa)) lie on the Cytoplasmic side of the membrane. Cysteine 2019, cysteine 2037, cysteine 2039, and cysteine 2060 together coordinate Zn(2+). Residues 2128 to 2216 (EFFTELDGVR…ASSSASQLSA (89 aa)) are FKBP8-binding. The transcriptional activation stretch occupies residues 2128-2340 (EFFTELDGVR…PVPPPRRKRT (213 aa)). The interval 2143-2147 (PPCKP) is interaction with non-structural protein 4A. Positions 2195–2218 (ARRLARGSPPSEASSSASQLSAPS) are enriched in low complexity. The disordered stretch occupies residues 2195 to 2226 (ARRLARGSPPSEASSSASQLSAPSLKATCQTH). An interaction with host SKP2 region spans residues 2197-2450 (RLARGSPPSE…AIITPCSAEE (254 aa)). Residues serine 2202, serine 2205, serine 2209, serine 2212, serine 2215, and serine 2218 each carry the phosphoserine; by host modification. Residues 2218–2257 (SLKATCQTHRPHPDAELIDANLLWRQEMGSNITRVESETK) are ISDR. Positions 2218-2283 (SLKATCQTHR…TELSIPAECF (66 aa)) are interaction with EIF2AK2/PKR. The segment at 2257 to 2314 (KVVILDSFEPLRAEEDDTELSIPAECFKKPPKYPPALPIWARPDYNPPLLPSWKDPTY) is NS4B-binding. The interval 2307–2385 (PSWKDPTYEP…GTESTAESGD (79 aa)) is V3. Disordered regions lie at residues 2320 to 2344 (HGCA…IKLD) and 2357 to 2422 (ERSF…STVS). The short motif at 2330-2333 (APVP) is the SH3-binding element. The short motif at 2335-2343 (PRRKRTIKL) is the Nuclear localization signal element. Residues 2366 to 2384 (EGTGTSSSGVGTESTAESG) show a composition bias toward low complexity. Phosphoserine; by host is present on residues serine 2461 and serine 2474. The 119-residue stretch at 2646 to 2764 (PLGFSYDTRC…ISESCGVEED (119 aa)) folds into the RdRp catalytic domain. Mg(2+)-binding residues include aspartate 2652, aspartate 2750, and aspartate 2751. The chain crosses the membrane as a helical span at residues 3003–3023 (HLLLCLLLLTVGVGIFLLPAR).

It belongs to the hepacivirus polyprotein family. As to quaternary structure, homooligomer. Interacts with E1 (via C-terminus). Interacts with the non-structural protein 5A. Interacts (via N-terminus) with host STAT1 (via SH2 domain); this interaction results in decreased STAT1 phosphorylation and ubiquitin-mediated proteasome-dependent STAT1 degradation, leading to decreased IFN-stimulated gene transcription. Interacts with host STAT3; this interaction constitutively activates STAT3. Interacts with host LTBR receptor. Interacts with host TNFRSF1A receptor and possibly induces apoptosis. Interacts with host HNRPK. Interacts with host YWHAE. Interacts with host UBE3A/E6AP. Interacts with host DDX3X. Interacts with host APOA2. Interacts with host RXRA protein. Interacts with host SP110 isoform 3/Sp110b; this interaction sequesters the transcriptional corepressor SP110 away from the nucleus. Interacts with host CREB3 nuclear transcription protein; this interaction triggers cell transformation. Interacts with host ACY3. Interacts with host C1QR1. Interacts with host RBM24; this interaction, which enhances the interaction of the mature core protein with 5'-UTR, may inhibit viral translation and favor replication. Interacts with host EIF2AK2/PKR; this interaction induces the autophosphorylation of EIF2AK2. Part of the viral assembly initiation complex composed of NS2, E1, E2, NS3, NS4A, NS5A and the mature core protein. In terms of assembly, forms a heterodimer with envelope glycoprotein E2. Interacts with mature core protein. Interacts with protease NS2. The heterodimer E1/E2 interacts with host CLDN1; this interaction plays a role in viral entry into host cell. Interacts with host SPSB2 (via C-terminus). Part of the viral assembly initiation complex composed of NS2, E1, E2, NS3, NS4A, NS5A and the mature core protein. Interacts with host NEURL3; this interaction prevents E1 binding to glycoprotein E2. Forms a heterodimer with envelope glycoprotein E1. Interacts with host CD81 and SCARB1 receptors; these interactions play a role in viral entry into host cell. Interacts with host EIF2AK2/PKR; this interaction inhibits EIF2AK2 and probably allows the virus to evade the innate immune response. Interacts with host CD209/DC-SIGN and CLEC4M/DC-SIGNR. Interact with host SPCS1; this interaction is essential for viral particle assembly. Interacts with protease NS2. The heterodimer E1/E2 interacts with host CLDN1; this interaction plays a role in viral entry into host cell. Part of the viral assembly initiation complex composed of NS2, E1, E2, NS3, NS4A, NS5A and the mature core protein. Interacts with host SLC3A2/4F2hc; the interaction may facilitate viral entry into host cell. Interacts with human PLSCR1. As to quaternary structure, homohexamer. Homoheptamer. Interacts with protease NS2. In terms of assembly, homodimer. Interacts with host SPCS1; this interaction is essential for viral particle assembly. Interacts with envelope glycoprotein E1. Interacts with envelope glycoprotein E2. Interacts with viroporin p7. Interacts with serine protease/helicase NS3. Part of the replication complex composed of NS2, NS3, NS4A, NS4B, NS5A and the RNA-directed RNA polymerase embedded in an ER-derived membranous web. Part of the viral assembly initiation complex composed of NS2, E1, E2, NS3, NS4A, NS5A and the mature core protein. Interacts with protease NS2. Interacts with non-structural protein 4A; this interaction stabilizes the folding of NS3 serine protease. NS3-NS4A interaction is essential for NS3 activation and allows membrane anchorage of the latter. NS3/NS4A complex also prevents phosphorylation of host IRF3, thus preventing the establishment of dsRNA induced antiviral state. Interacts with host MAVS; this interaction leads to the cleavage and inhibition of host MAVS. Interacts with host TICAM1; this interaction leads to the cleavage and inhibition of host TICAM1. Interacts with host TANK-binding kinase/TBK1; this interaction results in the inhibition of the association between TBK1 and IRF3, which leads to the inhibition of IRF3 activation. Interacts with host RBM24. Part of the replication complex composed of NS2, NS3, NS4A, NS4B, NS5A and the RNA-directed RNA polymerase embedded in an ER-derived membranous web. Part of the viral assembly initiation complex composed of NS2, E1, E2, NS3, NS4A, NS5A and the mature core protein. As to quaternary structure, interacts with NS3 serine protease; this interaction stabilizes the folding of NS3 serine protease. NS3-NS4A interaction is essential for NS3 activation and allows membrane anchorage of the latter. Interacts with non-structural protein 5A (via N-terminus). Part of the replication complex composed of NS2, NS3, NS4A, NS4B, NS5A and the RNA-directed RNA polymerase embedded in an ER-derived membranous web. Part of the viral assembly initiation complex composed of NS2, E1, E2, NS3, NS4A, NS5A and the mature core protein. In terms of assembly, homomultimer. Interacts with non-structural protein NS5A. Interacts with host PLA2G4C; this interaction likely initiates the recruitment of replication complexes to lipid droplets. Interacts with host STING; this interaction disrupts the interaction between STING and TBK1 thereby suppressing the interferon signaling. Part of the replication complex composed of NS2, NS3, NS4A, NS4B, NS5A and the RNA-directed RNA polymerase embedded in an ER-derived membranous web. Monomer. Homodimer; dimerization is required for RNA-binding. Interacts with the mature core protein. Interacts (via N-terminus) with non-structural protein 4A. Interacts with non-structural protein 4B. Interacts (via region D2) with RNA-directed RNA polymerase. Part of the viral assembly initiation complex composed of NS2, E1, E2, NS3, NS4A, NS5A and the mature core protein. Part of the replication complex composed of NS2, NS3, NS4A, NS4B, NS5A and the RNA-directed RNA polymerase embedded in an ER-derived membranous web. Interacts with host GRB2. Interacts with host BIN1. Interacts with host PIK3R1. Interacts with host SRCAP. Interacts with host FKBP8. Interacts (via C-terminus) with host VAPB (via MSP domain). Interacts with host EIF2AK2/PKR; this interaction leads to disruption of EIF2AK2 dimerization by NS5A and probably allows the virus to evade the innate immune response. Interacts (via N-terminus) with host PACSIN2 (via N-terminus); this interaction attenuates protein kinase C alpha-mediated phosphorylation of PACSIN2 by disrupting the interaction between PACSIN2 and PRKCA. Interacts (via N-terminus) with host SRC kinase (via SH2 domain). Interacts with most Src-family kinases. Interacts with host IFI27 and SKP2; promotes the ubiquitin-mediated proteasomal degradation of NS5A. Interacts with host GPS2. Interacts with host TNFRSF21; this interaction allows the modulation by the virus of JNK, p38 MAPK, STAT3, and Akt signaling pathways in a DR6-dependent manner. Interacts (via N-terminus) with host CIDEB (via N-terminus); this interaction seems to regulate the association of HCV particles with APOE. Interacts with host CHKA/Choline Kinase-alpha; CHKA bridges host PI4KA and NS5A and potentiates NS5A-stimulated PI4KA activity, which then facilitates the targeting of the ternary complex to the ER for viral replication. Interacts with host SPSB2 (via C-terminus); this interaction targets NS5A for ubiquitination and degradation. Interacts with host RAB18; this interaction may promote the association of NS5A and other replicase components with lipid droplets. Interacts (via region D2) with host PPIA/CYPA; the interaction stimulates RNA-binding ability of NS5A and is dependent on the peptidyl-prolyl cis-trans isomerase activity of PPIA/CYPA. Interacts with host TRIM14; this interaction induces the degradation of NS5A. As to quaternary structure, homooligomer. Interacts with non-structural protein 5A. Interacts with host VAPB. Interacts with host PRK2/PKN2. Interacts with host HNRNPA1 and SEPT6; these interactions facilitate viral replication. Part of the replication complex composed of NS2, NS3, NS4A, NS4B, NS5A and the RNA-directed RNA polymerase. Zn(2+) serves as cofactor. Mg(2+) is required as a cofactor. Post-translationally, specific enzymatic cleavages in vivo yield mature proteins. The structural proteins, core, E1, E2 and p7 are produced by proteolytic processing by host signal peptidases. The core protein precursor is synthesized as a 23 kDa, which is retained in the ER membrane through the hydrophobic signal peptide. Cleavage by the signal peptidase releases the 21 kDa mature core protein. The cleavage of the core protein precursor occurs between aminoacids 176 and 188 but the exact cleavage site is not known. Some degraded forms of the core protein appear as well during the course of infection. The other proteins (p7, NS2, NS3, NS4A, NS4B, NS5A and NS5B) are cleaved by the viral proteases. Autoprocessing between NS2 and NS3 is mediated by the NS2 cysteine protease catalytic domain and regulated by the NS3 N-terminal domain. In terms of processing, phosphorylated by host PKC and PKA. Ubiquitinated; mediated by UBE3A and leading to core protein subsequent proteasomal degradation. Post-translationally, highly N-glycosylated. In terms of processing, palmitoylation is required for NS2/3 autoprocessing and E2 recruitment to membranes. Palmitoylated. This modification may play a role in its polymerization or in protein-protein interactions. Post-translationally, phosphorylated on serines in a basal form termed p56. p58 is a hyperphosphorylated form of p56. p56 and p58 coexist in the cell in roughly equivalent amounts. Hyperphosphorylation is dependent on the presence of NS4A. Host CSNK1A1/CKI-alpha or RPS6KB1 kinases may be responsible for NS5A phosphorylation. In terms of processing, tyrosine phosphorylation is essential for the interaction with host SRC. The N-terminus is phosphorylated by host PRK2/PKN2.

The protein localises to the host endoplasmic reticulum membrane. Its subcellular location is the host mitochondrion membrane. The protein resides in the virion. It localises to the host cytoplasm. It is found in the host nucleus. The protein localises to the host lipid droplet. Its subcellular location is the virion membrane. The protein resides in the host mitochondrion. It localises to the host cell membrane. It is found in the host perinuclear region. The catalysed reaction is Hydrolysis of four peptide bonds in the viral precursor polyprotein, commonly with Asp or Glu in the P6 position, Cys or Thr in P1 and Ser or Ala in P1'.. It carries out the reaction a ribonucleoside 5'-triphosphate + H2O = a ribonucleoside 5'-diphosphate + phosphate + H(+). It catalyses the reaction ATP + H2O = ADP + phosphate + H(+). The enzyme catalyses RNA(n) + a ribonucleoside 5'-triphosphate = RNA(n+1) + diphosphate. Its activity is regulated as follows. Inhibited by the antiviral drug hexamethylene amiloride. Inhibition by amantadine appears to be genotype-dependent. Also inhibited by long-alkyl-chain iminosugar derivatives. With respect to regulation, activity is up-regulated by PRK2/PKN2-mediated phosphorylation. Functionally, packages viral RNA to form a viral nucleocapsid, and promotes virion budding. Participates in the viral particle production as a result of its interaction with the non-structural protein 5A. Binds RNA and may function as a RNA chaperone to induce the RNA structural rearrangements taking place during virus replication. Modulates viral translation initiation by interacting with viral IRES and 40S ribosomal subunit. Affects various cell signaling pathways, host immunity and lipid metabolism. Prevents the establishment of cellular antiviral state by blocking the interferon-alpha/beta (IFN-alpha/beta) and IFN-gamma signaling pathways and by blocking the formation of phosphorylated STAT1 and promoting ubiquitin-mediated proteasome-dependent degradation of STAT1. Activates STAT3 leading to cellular transformation. Regulates the activity of cellular genes, including c-myc and c-fos. May repress the promoter of p53, and sequester CREB3 and SP110 isoform 3/Sp110b in the cytoplasm. Represses cell cycle negative regulating factor CDKN1A, thereby interrupting an important check point of normal cell cycle regulation. Targets transcription factors involved in the regulation of inflammatory responses and in the immune response: suppresses TNF-induced NF-kappa-B activation, and activates AP-1. Binds to dendritic cells (DCs) via C1QR1, resulting in down-regulation of T-lymphocytes proliferation. Alters lipid metabolism by interacting with hepatocellular proteins involved in lipid accumulation and storage. Induces up-regulation of FAS promoter activity, and thereby contributes to the increased triglyceride accumulation in hepatocytes (steatosis). In terms of biological role, forms a heterodimer with envelope glycoprotein E2, which mediates virus attachment to the host cell, virion internalization through clathrin-dependent endocytosis and fusion with host membrane. Fusion with the host cell is most likely mediated by both E1 and E2, through conformational rearrangements of the heterodimer required for fusion rather than a classical class II fusion mechanism. E1/E2 heterodimer binds host apolipoproteins such as APOB and ApoE thereby forming a lipo-viro-particle (LVP). APOE associated to the LVP allows the initial virus attachment to cell surface receptors such as the heparan sulfate proteoglycans (HSPGs), syndecan-1 (SDC1), syndecan-1 (SDC2), the low-density lipoprotein receptor (LDLR) and scavenger receptor class B type I (SCARB1). The cholesterol transfer activity of SCARB1 allows E2 exposure and binding of E2 to SCARB1 and the tetraspanin CD81. E1/E2 heterodimer binding on CD81 activates the epithelial growth factor receptor (EGFR) signaling pathway. Diffusion of the complex E1-E2-EGFR-SCARB1-CD81 to the cell lateral membrane allows further interaction with Claudin 1 (CLDN1) and occludin (OCLN) to finally trigger HCV entry. Forms a heterodimer with envelope glycoprotein E1, which mediates virus attachment to the host cell, virion internalization through clathrin-dependent endocytosis and fusion with host membrane. Fusion with the host cell is most likely mediated by both E1 and E2, through conformational rearrangements of the heterodimer required for fusion rather than a classical class II fusion mechanism. The interaction between envelope glycoprotein E2 and host apolipoprotein E/APOE allows the proper assembly, maturation and infectivity of the viral particles. This interaction is probably promoted via the up-regulation of cellular autophagy by the virus. E1/E2 heterodimer binds host apolipoproteins such as APOB and APOE thereby forming a lipo-viro-particle (LVP). APOE associated to the LVP allows the initial virus attachment to cell surface receptors such as the heparan sulfate proteoglycans (HSPGs), syndecan-1 (SDC1), syndecan-1 (SDC2), the low-density lipoprotein receptor (LDLR) and scavenger receptor class B type I (SCARB1). The cholesterol transfer activity of SCARB1 allows E2 exposure and binding of E2 to SCARB1 and the tetraspanin CD81. E1/E2 heterodimer binding on CD81 activates the epithelial growth factor receptor (EGFR) signaling pathway. Diffusion of the complex E1-E2-EGFR-SCARB1-CD81 to the cell lateral membrane allows further interaction with Claudin 1 (CLDN1) and occludin (OCLN) to finally trigger HCV entry. Inhibits host EIF2AK2/PKR activation, preventing the establishment of an antiviral state. Viral ligand for CD209/DC-SIGN and CLEC4M/DC-SIGNR, which are respectively found on dendritic cells (DCs), and on liver sinusoidal endothelial cells and macrophage-like cells of lymph node sinuses. These interactions allow the capture of circulating HCV particles by these cells and subsequent facilitated transmission to permissive cells such as hepatocytes and lymphocyte subpopulations. The interaction between E2 and host amino acid transporter complex formed by SLC3A2 and SLC7A5/LAT1 may facilitate viral entry into host cell. Its function is as follows. Ion channel protein that acts as a viroporin and plays an essential role in the assembly, envelopment and secretion of viral particles. Regulates the host cell secretory pathway, which induces the intracellular retention of viral glycoproteins and favors assembly of viral particles. Creates a pore in acidic organelles and releases Ca(2+) and H(+) in the cytoplasm of infected cells, leading to a productive viral infection. High levels of cytoplasmic Ca(2+) may trigger membrane trafficking and transport of viral ER-associated proteins to viroplasms, sites of viral genome replication. This ionic imbalance induces the assembly of the inflammasome complex, which triggers the maturation of pro-IL-1beta into IL-1beta through the action of caspase-1. Targets also host mitochondria and induces mitochondrial depolarization. In addition of its role as a viroporin, acts as a lipid raft adhesion factor. Functionally, cysteine protease required for the proteolytic auto-cleavage between the non-structural proteins NS2 and NS3. The N-terminus of NS3 is required for the function of NS2 protease (active region NS2-3). Promotes the initiation of viral particle assembly by mediating the interaction between structural and non-structural proteins. In terms of biological role, displays three enzymatic activities: serine protease with a chymotrypsin-like fold, NTPase and RNA helicase. NS3 serine protease, in association with NS4A, is responsible for the cleavages of NS3-NS4A, NS4A-NS4B, NS4B-NS5A and NS5A-NS5B. The NS3/NS4A complex prevents phosphorylation of host IRF3, thus preventing the establishment of dsRNA induced antiviral state. The NS3/NS4A complex induces host amino acid transporter component SLC3A2, thus contributing to HCV propagation. NS3 RNA helicase binds to RNA and unwinds both dsDNA and dsRNA in the 3' to 5' direction, and likely resolves RNA complicated stable secondary structures in the template strand. Binds a single ATP and catalyzes the unzipping of a single base pair of dsRNA. Inhibits host antiviral proteins TBK1 and IRF3 thereby preventing the establishment of an antiviral state. Cleaves host MAVS/CARDIF thereby preventing the establishment of an antiviral state. Cleaves host TICAM1/TRIF, thereby disrupting TLR3 signaling and preventing the establishment of an antiviral state. Peptide cofactor which forms a non-covalent complex with the N-terminal of NS3 serine protease. The NS3/NS4A complex prevents phosphorylation of host IRF3, thus preventing the establishment of dsRNA induced antiviral state. The NS3/NS4A complex induces host amino acid transporter component SLC3A2, thus contributing to HCV propagation. Its function is as follows. Induces a specific membrane alteration that serves as a scaffold for the virus replication complex. This membrane alteration gives rise to the so-called ER-derived membranous web that contains the replication complex. NS4B self-interaction contributes to its function in membranous web formation. Promotes host TRIF protein degradation in a CASP8-dependent manner thereby inhibiting host TLR3-mediated interferon signaling. Disrupts the interaction between STING and TBK1 contributing to the inhibition of interferon signaling. Functionally, phosphorylated protein that is indispensable for viral replication and assembly. Both hypo- and hyperphosphorylated states are required for the viral life cycle. The hyperphosphorylated form of NS5A is an inhibitor of viral replication. Involved in RNA-binding and especially in binding to the viral genome. Zinc is essential for RNA-binding. Participates in the viral particle production as a result of its interaction with the mature viral core protein. Its interaction with host VAPB may target the viral replication complex to vesicles. Down-regulates viral IRES translation initiation. Mediates interferon resistance, presumably by interacting with and inhibiting host EIF2AK2/PKR. Prevents BIN1-induced apoptosis. Acts as a transcriptional activator of some host genes important for viral replication when localized in the nucleus. Via the interaction with host PACSIN2, modulates lipid droplet formation in order to promote virion assembly. Modulates TNFRSF21/DR6 signaling pathway for viral propagation. In terms of biological role, RNA-dependent RNA polymerase that performs primer-template recognition and RNA synthesis during viral replication. Initiates RNA transcription/replication at a flavin adenine dinucleotide (FAD), resulting in a 5'- FAD cap on viral RNAs. In this way, recognition of viral 5' RNA by host pattern recognition receptors can be bypassed, thereby evading activation of antiviral pathways. The protein is Genome polyprotein of Homo sapiens (Human).